The primary structure comprises 332 residues: UDP-3-O-acylglucosamine N-acyltransferase (332 aa).

H231 functions as the Proton acceptor in the catalytic mechanism.

The protein belongs to the transferase hexapeptide repeat family. LpxD subfamily. In terms of assembly, homotrimer.

The enzyme catalyses a UDP-3-O-[(3R)-3-hydroxyacyl]-alpha-D-glucosamine + a (3R)-hydroxyacyl-[ACP] = a UDP-2-N,3-O-bis[(3R)-3-hydroxyacyl]-alpha-D-glucosamine + holo-[ACP] + H(+). The protein operates within bacterial outer membrane biogenesis; LPS lipid A biosynthesis. Its function is as follows. Catalyzes the N-acylation of UDP-3-O-acylglucosamine using 3-hydroxyacyl-ACP as the acyl donor. Is involved in the biosynthesis of lipid A, a phosphorylated glycolipid that anchors the lipopolysaccharide to the outer membrane of the cell. In Vesicomyosocius okutanii subsp. Calyptogena okutanii (strain HA), this protein is UDP-3-O-acylglucosamine N-acyltransferase.